A 301-amino-acid chain; its full sequence is Cell division control protein 2 homolog 1 (301 aa).

The Protein kinase domain maps to 5–297 (YQRLEKIGEG…AAQALEHPYF (293 aa)). ATP-binding positions include 11-19 (IGEGSYGVV) and lysine 34. Position 15 is a phosphoserine (serine 15). Tyrosine 16 bears the Phosphotyrosine mark. Aspartate 127 (proton acceptor) is an active-site residue. Threonine 160 bears the Phosphothreonine; by CAK mark.

This sequence belongs to the protein kinase superfamily. CMGC Ser/Thr protein kinase family. CDC2/CDKX subfamily. Forms a stable but non-covalent complex with a regulatory subunit and with a cyclin.

The catalysed reaction is L-seryl-[protein] + ATP = O-phospho-L-seryl-[protein] + ADP + H(+). It carries out the reaction L-threonyl-[protein] + ATP = O-phospho-L-threonyl-[protein] + ADP + H(+). Its activity is regulated as follows. Phosphorylation at Ser-15 or Tyr-16 inactivates the enzyme, while phosphorylation at Thr-160 activates it. Functionally, probably involved in the control of the cell cycle. In Trypanosoma congolense, this protein is Cell division control protein 2 homolog 1 (CRK1).